A 377-amino-acid polypeptide reads, in one-letter code: Cell division protein FtsZ (377 aa).

Acidic residues predominate over residues 1–16; the sequence is MDSIVDDAIDEAEDMG. The interval 1–33 is disordered; it reads MDSIVDDAIDEAEDMGDGSAEVGGPTDINRSGT. GTP contacts are provided by residues 57-61, 144-146, Glu-175, Arg-179, and Asp-222; these read GAGGN and GTG.

Belongs to the FtsZ family. As to quaternary structure, homodimer. Polymerizes to form a dynamic ring structure in a strictly GTP-dependent manner. Interacts directly with several other division proteins.

It localises to the cytoplasm. Functionally, essential cell division protein that forms a contractile ring structure (Z ring) at the future cell division site. The regulation of the ring assembly controls the timing and the location of cell division. One of the functions of the FtsZ ring is to recruit other cell division proteins to the septum to produce a new cell wall between the dividing cells. Binds GTP and shows GTPase activity. The polypeptide is Cell division protein FtsZ (Haloferax mediterranei (strain ATCC 33500 / DSM 1411 / JCM 8866 / NBRC 14739 / NCIMB 2177 / R-4) (Halobacterium mediterranei)).